The primary structure comprises 2158 residues: Non-reducing polyketide synthase Preu8 (2158 aa).

The tract at residues 4–241 (LVLGDQVADH…TPIPVFAPYH (238 aa)) is N-terminal acylcarrier protein transacylase domain (SAT). The region spanning 369–801 (NDKIAIVGMS…GGNTAIILED (433 aa)) is the Ketosynthase family 3 (KS3) domain. Residues C541, H676, and H719 each act as for beta-ketoacyl synthase activity in the active site. The segment at 900-1215 (FTFTGQGSQY…ANSVSTLFLA (316 aa)) is malonyl-CoA:ACP transacylase (MAT) domain. S989 (for acyl/malonyl transferase activity) is an active-site residue. Positions 1285 to 1603 (SCQRIVREEL…RRVLNIMMPP (319 aa)) are product template (PT) domain. An N-terminal hotdog fold region spans residues 1287 to 1423 (QRIVREELHA…GTVKYEDVSQ (137 aa)). Residues 1287-1598 (QRIVREELHA…FQNIARRVLN (312 aa)) form the PKS/mFAS DH domain. The Proton acceptor; for dehydratase activity role is filled by H1319. The segment at 1451-1598 (AHKVLRGMAY…FQNIARRVLN (148 aa)) is C-terminal hotdog fold. D1511 (proton donor; for dehydratase activity) is an active-site residue. Positions 1619 to 1639 (KKAASPTLAPAKAAKPAAKTS) are enriched in low complexity. The segment at 1619-1654 (KKAASPTLAPAKAAKPAAKTSKPSKARAKPAADSTT) is disordered. In terms of domain architecture, Carrier 1 spans 1651 to 1725 (DSTTSRVMKI…QMKKFFSQYD (75 aa)). S1685 carries the post-translational modification O-(pantetheine 4'-phosphoryl)serine. Positions 1723 to 1779 (QYDGAPIPDDGDDSDGTDEPSNFSTPSYGADNASTPPSSAPSVNGKSSPENHEVLES) are disordered. The span at 1731 to 1740 (DDGDDSDGTD) shows a compositional bias: acidic residues. The span at 1743 to 1770 (SNFSTPSYGADNASTPPSSAPSVNGKSS) shows a compositional bias: polar residues. The Carrier 2 domain occupies 1779–1853 (STEVSLARKI…DIENELGMRP (75 aa)). S1813 is subject to O-(pantetheine 4'-phosphoryl)serine. Positions 1847–1879 (NELGMRPKPKPKAEAAPPKSSAKASPSANKQPQ) are disordered. The span at 1860–1876 (EAAPPKSSAKASPSANK) shows a compositional bias: low complexity. The tract at residues 1894-2144 (SQYPPANSVL…NHFTMMKGDH (251 aa)) is thioesterase (TE) domain.

It depends on pantetheine 4'-phosphate as a cofactor.

Functionally, non-reducing polyketide synthase; part of a gene cluster that mediates the biosynthesis of a yet unidentified natural product. The polypeptide is Non-reducing polyketide synthase Preu8 (Preussia isomera (Coprophilous fungus)).